Reading from the N-terminus, the 211-residue chain is 3-demethoxyubiquinol 3-hydroxylase (211 aa).

Positions 60, 90, 93, 142, 174, and 177 each coordinate Fe cation.

It belongs to the COQ7 family. Fe cation is required as a cofactor.

It is found in the cell membrane. The catalysed reaction is a 5-methoxy-2-methyl-3-(all-trans-polyprenyl)benzene-1,4-diol + AH2 + O2 = a 3-demethylubiquinol + A + H2O. It functions in the pathway cofactor biosynthesis; ubiquinone biosynthesis. Its function is as follows. Catalyzes the hydroxylation of 2-nonaprenyl-3-methyl-6-methoxy-1,4-benzoquinol during ubiquinone biosynthesis. The sequence is that of 3-demethoxyubiquinol 3-hydroxylase from Herminiimonas arsenicoxydans.